Consider the following 38-residue polypeptide: MKVRSSVKPICEHCKVVKRQGVTRIICKRNPKHKQRQG.

It belongs to the bacterial ribosomal protein bL36 family.

In Gemmatimonas aurantiaca (strain DSM 14586 / JCM 11422 / NBRC 100505 / T-27), this protein is Large ribosomal subunit protein bL36.